Reading from the N-terminus, the 283-residue chain is Homeobox protein Hox-A9a (283 aa).

Disordered regions lie at residues 25–54 and 162–181; these read VPRYSAGPGHQHSRQPASIGDPHSELGTCS and EKDAVSSHTGDGVDTEEKPG. A DNA-binding region (homeobox) is located at residues 216–275; that stretch reads TRKKRCPYTKHQILELEKEFLFNTYLTRDRRYEVARLLNLTERQVKIWFQNRRMKMKKFN.

Belongs to the Abd-B homeobox family.

It is found in the nucleus. Its function is as follows. Sequence-specific transcription factor which is part of a developmental regulatory system that provides cells with specific positional identities on the anterior-posterior axis. The polypeptide is Homeobox protein Hox-A9a (hoxa9a) (Takifugu rubripes (Japanese pufferfish)).